The sequence spans 338 residues: Nicotinate-nucleotide--dimethylbenzimidazole phosphoribosyltransferase (338 aa).

Glutamate 305 functions as the Proton acceptor in the catalytic mechanism.

The protein belongs to the CobT family.

It carries out the reaction 5,6-dimethylbenzimidazole + nicotinate beta-D-ribonucleotide = alpha-ribazole 5'-phosphate + nicotinate + H(+). It functions in the pathway nucleoside biosynthesis; alpha-ribazole biosynthesis; alpha-ribazole from 5,6-dimethylbenzimidazole: step 1/2. Functionally, catalyzes the synthesis of alpha-ribazole-5'-phosphate from nicotinate mononucleotide (NAMN) and 5,6-dimethylbenzimidazole (DMB). The protein is Nicotinate-nucleotide--dimethylbenzimidazole phosphoribosyltransferase of Novosphingobium aromaticivorans (strain ATCC 700278 / DSM 12444 / CCUG 56034 / CIP 105152 / NBRC 16084 / F199).